A 273-amino-acid polypeptide reads, in one-letter code: UPF0380 protein YubP (273 aa).

It belongs to the UPF0380 family.

In Escherichia coli (strain K12), this protein is UPF0380 protein YubP (yubP).